The sequence spans 616 residues: Sodium- and chloride-dependent transporter XTRP3 (616 aa).

Residues 1 to 11 (MRLAIKRRASR) are compositionally biased toward basic residues. The segment at 1-26 (MRLAIKRRASRGQRPGPDEKRARDME) is disordered. Residues 1 to 37 (MRLAIKRRASRGQRPGPDEKRARDMEKARPQWGNPLQ) lie on the Cytoplasmic side of the membrane. The segment covering 16-26 (GPDEKRARDME) has biased composition (basic and acidic residues). Residues 38 to 58 (FVFACISYAVGLGNVWRFPYL) form a helical membrane-spanning segment. Residues 59 to 66 (CQMYGGGS) are Extracellular-facing. Residues 67–87 (FLVPYLIMLIVEGMPLLYLEL) traverse the membrane as a helical segment. Over 88–103 (AVGQRMRQGSIGAWRT) the chain is Cytoplasmic. The helical transmembrane segment at 104–124 (ISPYLSGVGVASVVVSFFLSM) threads the bilayer. The Extracellular segment spans residues 125 to 189 (YYNVINAWGF…ISPSIQENGG (65 aa)). The N-linked (GlcNAc...) asparagine glycan is linked to asparagine 155. The chain crosses the membrane as a helical span at residues 190 to 210 (VQWEPALCLTLAWLMVYLCIL). Residues 211-218 (RGTESTGK) are Cytoplasmic-facing. The chain crosses the membrane as a helical span at residues 219 to 239 (VVYFTALMPYCVLIIYLVRGL). The Extracellular portion of the chain corresponds to 240 to 265 (TLHGATNGLMYMFTPKIEQLANPKAW). Residues 266–286 (INAATQIFFSLGLGFGSLIAF) traverse the membrane as a helical segment. At 287–300 (ASYNEPSNDCQKHA) the chain is on the cytoplasmic side. A helical transmembrane segment spans residues 301–321 (VIVSVINSSTSIFASIVTFSI). Residues 322–413 (YGFKATFNYE…EAIKNMEVSQ (92 aa)) lie on the Extracellular side of the membrane. Residue asparagine 381 is glycosylated (N-linked (GlcNAc...) asparagine). The helical transmembrane segment at 414–434 (LWSVLYFFMLLMLGMGSMLGN) threads the bilayer. Residues 435–455 (TAAILTPLTDSKVISSYLPKE) are Cytoplasmic-facing. The helical transmembrane segment at 456-476 (AISGLVCLINCAVGMVFTMEA) threads the bilayer. At 477 to 489 (GNYWFDIFNDYAA) the chain is on the extracellular side. Residues 490–510 (TLSLLLIVLVETIAVCYVYGL) form a helical membrane-spanning segment. Residues 511-533 (RRFESDLRAMTGRPLNWYWKAMW) are Cytoplasmic-facing. The helical transmembrane segment at 534-554 (AFVSPLLIIGLFIFYLSDYIL) threads the bilayer. At 555–578 (TGTLQYQAWDATQGQLVTKDYPPH) the chain is on the extracellular side. A helical membrane pass occupies residues 579–599 (ALAVIGLLVASSTMCIPLVAL). Topologically, residues 600–616 (GTFIRNRLKRGGSSPVA) are cytoplasmic.

Belongs to the sodium:neurotransmitter symporter (SNF) (TC 2.A.22) family. SLC6A20 subfamily. Highly expressed in epithelial cells of duodenum, jejunum, ileum, stomach, cecum, colon and kidney proximal tubule. Also expressed in the choroid plexus, microglia and meniges of the brain and in the ovary.

The protein resides in the apical cell membrane. It catalyses the reaction L-proline(out) + chloride(out) + 2 Na(+)(out) = L-proline(in) + chloride(in) + 2 Na(+)(in). The enzyme catalyses 4-hydroxy-L-proline(out) + chloride(out) + 2 Na(+)(out) = 4-hydroxy-L-proline(in) + chloride(in) + 2 Na(+)(in). It carries out the reaction 2-methyl-2-(methylamino)propanoate(out) + chloride(out) + 2 Na(+)(out) = 2-methyl-2-(methylamino)propanoate(in) + chloride(in) + 2 Na(+)(in). The catalysed reaction is L-pipecolate(out) + chloride(out) + 2 Na(+)(out) = L-pipecolate(in) + chloride(in) + 2 Na(+)(in). It catalyses the reaction glycine betaine(out) + chloride(out) + 2 Na(+)(out) = glycine betaine(in) + chloride(in) + 2 Na(+)(in). The enzyme catalyses glycine(out) + chloride(out) + 2 Na(+)(out) = glycine(in) + chloride(in) + 2 Na(+)(in). Mediates the Na(+)- and Cl(-)-dependent uptake of imino acids such as L-proline, N-methyl-L-proline and pipecolate as well as N-methylated amino acids. Also transports glycine, regulates proline and glycine homeostasis in the brain playing a role in the modulation of NMDAR currents. The polypeptide is Sodium- and chloride-dependent transporter XTRP3 (Rattus norvegicus (Rat)).